A 716-amino-acid polypeptide reads, in one-letter code: ATP-dependent zinc metalloprotease FTSH 1, chloroplastic (716 aa).

A chloroplast-targeting transit peptide spans 1 to 48 (MASNSLLRSSSNFFLGSHIIISSPTPKTTRKPSFPFSFVSRAKYQITR). A thylakoid-targeting transit peptide spans 49–86 (SSQDENSPNGKPNSPFSSQVALAAILLSSISSSPLALA). Residues 204-224 (FTVIGNLIFPLLAFGGLFLLF) form a helical membrane-spanning segment. 302–309 (GPPGTGKT) contacts ATP. Histidine 524 serves as a coordination point for Zn(2+). Residue glutamate 525 is part of the active site. Zn(2+) is bound by residues histidine 528 and aspartate 605.

This sequence in the N-terminal section; belongs to the AAA ATPase family. In the C-terminal section; belongs to the peptidase M41 family. As to quaternary structure, interacts with CHIP and HSP70. Heterohexamers with FTSH2, FTSH5 and FTSH8. Requires Zn(2+) as cofactor. The FTSH1 precursor is ubiquitinated by CHIP in the cytoplasm. As to expression, ubiquitous.

The protein localises to the plastid. It localises to the chloroplast thylakoid membrane. Functionally, part of a complex that function as an ATP-dependent zinc metallopeptidase. Involved in the thylakoid formation and in the removal of damaged D1 in the photosystem II, preventing cell death under high-intensity light conditions. The chain is ATP-dependent zinc metalloprotease FTSH 1, chloroplastic (FTSH1) from Arabidopsis thaliana (Mouse-ear cress).